We begin with the raw amino-acid sequence, 568 residues long: Probable asparagine--tRNA ligase, cytoplasmic (568 aa).

The protein belongs to the class-II aminoacyl-tRNA synthetase family.

It localises to the cytoplasm. The enzyme catalyses tRNA(Asn) + L-asparagine + ATP = L-asparaginyl-tRNA(Asn) + AMP + diphosphate + H(+). Functionally, cytosolic asparaginyl-tRNA synthetase which catalyzes the specific attachment of asparagine to its cognate tRNA. This Schizosaccharomyces pombe (strain 972 / ATCC 24843) (Fission yeast) protein is Probable asparagine--tRNA ligase, cytoplasmic (nrs1).